A 227-amino-acid chain; its full sequence is MAYPMQLGFQDATSPIMEELLHFHDHTLMIVFLISSLVLYIISLMLTTKLTHTSTMDAQEVETIWTILPAIILILIALPSLRILYMMDEINNPSLTVKTMGHQWYWSYEYTDYEDLSFDSYMIPTSELKPGELRLLEVDNRVVLPMEMTIRMLVSSEDVLHSWAVPSLGLKTDAIPGRLNQTTLMSTRPGLYYGQCSEICGSNHSFMPIVLELVPLKYFEKWSASML.

Topologically, residues 1–14 are mitochondrial intermembrane; that stretch reads MAYPMQLGFQDATS. A helical membrane pass occupies residues 15 to 45; sequence PIMEELLHFHDHTLMIVFLISSLVLYIISLM. The Mitochondrial matrix segment spans residues 46-59; the sequence is LTTKLTHTSTMDAQ. Residues 60-87 form a helical membrane-spanning segment; that stretch reads EVETIWTILPAIILILIALPSLRILYMM. Over 88 to 227 the chain is Mitochondrial intermembrane; that stretch reads DEINNPSLTV…YFEKWSASML (140 aa). Residues histidine 161, cysteine 196, glutamate 198, cysteine 200, histidine 204, and methionine 207 each contribute to the Cu cation site. Glutamate 198 contributes to the Mg(2+) binding site. The residue at position 218 (tyrosine 218) is a Phosphotyrosine.

The protein belongs to the cytochrome c oxidase subunit 2 family. Component of the cytochrome c oxidase (complex IV, CIV), a multisubunit enzyme composed of 14 subunits. The complex is composed of a catalytic core of 3 subunits MT-CO1, MT-CO2 and MT-CO3, encoded in the mitochondrial DNA, and 11 supernumerary subunits COX4I, COX5A, COX5B, COX6A, COX6B, COX6C, COX7A, COX7B, COX7C, COX8 and NDUFA4, which are encoded in the nuclear genome. The complex exists as a monomer or a dimer and forms supercomplexes (SCs) in the inner mitochondrial membrane with NADH-ubiquinone oxidoreductase (complex I, CI) and ubiquinol-cytochrome c oxidoreductase (cytochrome b-c1 complex, complex III, CIII), resulting in different assemblies (supercomplex SCI(1)III(2)IV(1) and megacomplex MCI(2)III(2)IV(2)). Found in a complex with TMEM177, COA6, COX18, COX20, SCO1 and SCO2. Interacts with TMEM177 in a COX20-dependent manner. Interacts with COX20. Interacts with COX16. Cu cation serves as cofactor.

The protein localises to the mitochondrion inner membrane. It catalyses the reaction 4 Fe(II)-[cytochrome c] + O2 + 8 H(+)(in) = 4 Fe(III)-[cytochrome c] + 2 H2O + 4 H(+)(out). Functionally, component of the cytochrome c oxidase, the last enzyme in the mitochondrial electron transport chain which drives oxidative phosphorylation. The respiratory chain contains 3 multisubunit complexes succinate dehydrogenase (complex II, CII), ubiquinol-cytochrome c oxidoreductase (cytochrome b-c1 complex, complex III, CIII) and cytochrome c oxidase (complex IV, CIV), that cooperate to transfer electrons derived from NADH and succinate to molecular oxygen, creating an electrochemical gradient over the inner membrane that drives transmembrane transport and the ATP synthase. Cytochrome c oxidase is the component of the respiratory chain that catalyzes the reduction of oxygen to water. Electrons originating from reduced cytochrome c in the intermembrane space (IMS) are transferred via the dinuclear copper A center (CU(A)) of subunit 2 and heme A of subunit 1 to the active site in subunit 1, a binuclear center (BNC) formed by heme A3 and copper B (CU(B)). The BNC reduces molecular oxygen to 2 water molecules using 4 electrons from cytochrome c in the IMS and 4 protons from the mitochondrial matrix. In Bison bonasus (European bison), this protein is Cytochrome c oxidase subunit 2 (MT-CO2).